We begin with the raw amino-acid sequence, 154 residues long: AP-1 complex subunit sigma-2 (154 aa).

The protein belongs to the adaptor complexes small subunit family. Adaptor protein complex 1 (AP-1) is a heterotetramer composed of two large adaptins (gamma-type subunit and beta-type subunit), a medium adaptin (mu-type subunit) and a small adaptin (sigma-type subunit).

It is found in the golgi apparatus. The protein resides in the trans-Golgi network. Its subcellular location is the cytoplasmic vesicle. The protein localises to the clathrin-coated vesicle membrane. Functionally, subunit of clathrin-associated adaptor protein complex 1 that plays a role in protein sorting in the trans-Golgi network (TGN) and endosomes. The AP complexes mediate the recruitment of clathrin to membranes and the recognition of sorting signals within the cytosolic tails of transmembrane cargo molecules. Also involved in early steps of phagocytosis and macropinocytosis. In Dictyostelium discoideum (Social amoeba), this protein is AP-1 complex subunit sigma-2 (ap1s2).